Consider the following 404-residue polypeptide: Clavilactone A biosynthesis cluster protein Y (404 aa).

Functionally, part of the gene cluster that mediates the biosynthesis of clavilactone A, a meroterpenoid that features a unique benzo-fused ten-membered carbocyclic ring unit with an alpha,beta-epoxy-gamma-lactone moiety, forming an intriguing 10/5/3 tricyclic nested skeleton. ClaR, ClaS and ClaT are sufficient to produce clavilactone A and the function of claY, if any, has still to be identified. The biosynthesis begins with the prenyltransferase claS that transfers geranyl pyrophosphate (GPP) to hydroquinone to produces geranylhydroquinon. The cytochrome P450 monooxygenase claR then catalyzes the diradical coupling reaction between the intramolecular hydroquinone and allyl moieties to form the benzo-fused ten-membered carbocyclic ring unit of wigantol. Finally the cytochrome P450 monooxygenase claT exquisitely and stereoselectively assembles the alpha,beta-epoxy-gamma-lactone moiety, producing clavilactone A via arnebinol A. The polypeptide is Clavilactone A biosynthesis cluster protein Y (Ampulloclitocybe clavipes (Club foot)).